The sequence spans 1058 residues: Carbamoyl phosphate synthase large chain (1058 aa).

A carboxyphosphate synthetic domain region spans residues 1–401 (MPKRKDIQKI…SLLKACRSLE (401 aa)). 12 residues coordinate ATP: Arg-129, Arg-169, Gly-175, Gly-176, Arg-208, Ile-210, Glu-215, Gly-241, Ile-242, His-243, Gln-284, and Glu-298. The region spanning 133–327 (KQLMQELDQP…IAKLAAKIAV (195 aa)) is the ATP-grasp 1 domain. Residues Gln-284, Glu-298, and Asn-300 each coordinate Mg(2+). The Mn(2+) site is built by Gln-284, Glu-298, and Asn-300. Residues 402–546 (IGVCHNEMTS…YSTYELENES (145 aa)) are oligomerization domain. Positions 547-929 (VQSNKESILV…ALYKAFEANN (383 aa)) are carbamoyl phosphate synthetic domain. One can recognise an ATP-grasp 2 domain in the interval 671–861 (EKALKELGIP…MAQIATKLIL (191 aa)). ATP is bound by residues Arg-707, Ser-746, Ile-748, Glu-752, Gly-777, Val-778, His-779, Ser-780, Gln-820, and Glu-832. Mg(2+) contacts are provided by Gln-820, Glu-832, and Asn-834. 3 residues coordinate Mn(2+): Gln-820, Glu-832, and Asn-834. The region spanning 930–1058 (SHLSEFGQIV…ESRCFNIEAI (129 aa)) is the MGS-like domain. Residues 930 to 1058 (SHLSEFGQIV…ESRCFNIEAI (129 aa)) form an allosteric domain region.

This sequence belongs to the CarB family. Composed of two chains; the small (or glutamine) chain promotes the hydrolysis of glutamine to ammonia, which is used by the large (or ammonia) chain to synthesize carbamoyl phosphate. Tetramer of heterodimers (alpha,beta)4. It depends on Mg(2+) as a cofactor. Mn(2+) is required as a cofactor.

It catalyses the reaction hydrogencarbonate + L-glutamine + 2 ATP + H2O = carbamoyl phosphate + L-glutamate + 2 ADP + phosphate + 2 H(+). The catalysed reaction is hydrogencarbonate + NH4(+) + 2 ATP = carbamoyl phosphate + 2 ADP + phosphate + 2 H(+). The protein operates within amino-acid biosynthesis; L-arginine biosynthesis; carbamoyl phosphate from bicarbonate: step 1/1. Its pathway is pyrimidine metabolism; UMP biosynthesis via de novo pathway; (S)-dihydroorotate from bicarbonate: step 1/3. Functionally, large subunit of the glutamine-dependent carbamoyl phosphate synthetase (CPSase). CPSase catalyzes the formation of carbamoyl phosphate from the ammonia moiety of glutamine, carbonate, and phosphate donated by ATP, constituting the first step of 2 biosynthetic pathways, one leading to arginine and/or urea and the other to pyrimidine nucleotides. The large subunit (synthetase) binds the substrates ammonia (free or transferred from glutamine from the small subunit), hydrogencarbonate and ATP and carries out an ATP-coupled ligase reaction, activating hydrogencarbonate by forming carboxy phosphate which reacts with ammonia to form carbamoyl phosphate. In Streptococcus pyogenes serotype M1, this protein is Carbamoyl phosphate synthase large chain.